We begin with the raw amino-acid sequence, 199 residues long: NAD(P)H dehydrogenase (quinone) (199 aa).

The 187-residue stretch at 4–190 folds into the Flavodoxin-like domain; sequence VLVLYYSAYG…AGARYQGRVI (187 aa). FMN contacts are provided by residues 10 to 15 and 78 to 80; these read SAYGHI and TRF. Residue tyrosine 12 coordinates NAD(+). Tryptophan 98 lines the substrate pocket. FMN is bound by residues 113-119 and histidine 134; that span reads STATQHG.

It belongs to the WrbA family. FMN serves as cofactor.

It carries out the reaction a quinone + NADH + H(+) = a quinol + NAD(+). The enzyme catalyses a quinone + NADPH + H(+) = a quinol + NADP(+). This chain is NAD(P)H dehydrogenase (quinone), found in Bradyrhizobium sp. (strain ORS 278).